The chain runs to 129 residues: Glycine cleavage system H protein (129 aa).

The Lipoyl-binding domain occupies 24–106; it reads SYTVGITEHA…FGDGWFFRVM (83 aa). Lysine 65 bears the N6-lipoyllysine mark.

It belongs to the GcvH family. The glycine cleavage system is composed of four proteins: P, T, L and H. Requires (R)-lipoate as cofactor.

In terms of biological role, the glycine cleavage system catalyzes the degradation of glycine. The H protein shuttles the methylamine group of glycine from the P protein to the T protein. In Shewanella frigidimarina (strain NCIMB 400), this protein is Glycine cleavage system H protein.